A 214-amino-acid chain; its full sequence is tRNA (guanine-N(7)-)-methyltransferase (214 aa).

The S-adenosyl-L-methionine site is built by E44, E69, D96, and D118. D118 is a catalytic residue. K122 contacts substrate. Positions 124–129 are interaction with RNA; sequence RHEKRR. Substrate is bound by residues D154 and 192 to 195; that span reads TEYE.

Belongs to the class I-like SAM-binding methyltransferase superfamily. TrmB family.

It catalyses the reaction guanosine(46) in tRNA + S-adenosyl-L-methionine = N(7)-methylguanosine(46) in tRNA + S-adenosyl-L-homocysteine. It participates in tRNA modification; N(7)-methylguanine-tRNA biosynthesis. Its function is as follows. Catalyzes the formation of N(7)-methylguanine at position 46 (m7G46) in tRNA. This Lacticaseibacillus casei (strain BL23) (Lactobacillus casei) protein is tRNA (guanine-N(7)-)-methyltransferase.